The following is a 274-amino-acid chain: 4-hydroxy-tetrahydrodipicolinate reductase (274 aa).

NAD(+) is bound by residues 8–13, Glu-34, 102–104, and 128–131; these read GALGRM, GTT, and SQNF. The Proton donor/acceptor role is filled by His-160. Position 161 (His-161) interacts with (S)-2,3,4,5-tetrahydrodipicolinate. Lys-164 (proton donor) is an active-site residue. 170–171 provides a ligand contact to (S)-2,3,4,5-tetrahydrodipicolinate; that stretch reads GT.

This sequence belongs to the DapB family.

Its subcellular location is the cytoplasm. It catalyses the reaction (S)-2,3,4,5-tetrahydrodipicolinate + NAD(+) + H2O = (2S,4S)-4-hydroxy-2,3,4,5-tetrahydrodipicolinate + NADH + H(+). It carries out the reaction (S)-2,3,4,5-tetrahydrodipicolinate + NADP(+) + H2O = (2S,4S)-4-hydroxy-2,3,4,5-tetrahydrodipicolinate + NADPH + H(+). Its pathway is amino-acid biosynthesis; L-lysine biosynthesis via DAP pathway; (S)-tetrahydrodipicolinate from L-aspartate: step 4/4. In terms of biological role, catalyzes the conversion of 4-hydroxy-tetrahydrodipicolinate (HTPA) to tetrahydrodipicolinate. This is 4-hydroxy-tetrahydrodipicolinate reductase from Methanocaldococcus jannaschii (strain ATCC 43067 / DSM 2661 / JAL-1 / JCM 10045 / NBRC 100440) (Methanococcus jannaschii).